The primary structure comprises 80 residues: Sulfur carrier protein TusA (80 aa).

C17 (cysteine persulfide intermediate) is an active-site residue.

It belongs to the sulfur carrier protein TusA family.

Its subcellular location is the cytoplasm. Sulfur carrier protein which probably makes part of a sulfur-relay system. In Pseudomonas putida (strain W619), this protein is Sulfur carrier protein TusA.